Here is a 367-residue protein sequence, read N- to C-terminus: Heat-inducible transcription repressor HrcA (367 aa).

It belongs to the HrcA family.

In terms of biological role, negative regulator of class I heat shock genes (grpE-dnaK-dnaJ and groELS operons). Prevents heat-shock induction of these operons. In Acaryochloris marina (strain MBIC 11017), this protein is Heat-inducible transcription repressor HrcA.